The sequence spans 390 residues: 3-ketosteroid-9-alpha-monooxygenase, oxygenase component (390 aa).

Residues 32 to 134 form the Rieske domain; sequence WHCLGLLRDF…TLERNGQLYV (103 aa). Residues Cys-73, His-75, Cys-92, and His-95 each coordinate [2Fe-2S] cluster. Asn-181, His-187, His-192, and Asp-311 together coordinate Fe cation.

Homotrimer. The two-component system 3-ketosteroid-9-alpha-monooxygenase is composed of an oxygenase component KshA and a reductase component KshB. It depends on [2Fe-2S] cluster as a cofactor. Requires Fe cation as cofactor.

The catalysed reaction is androsta-1,4-diene-3,17-dione + 2 reduced [2Fe-2S]-[ferredoxin] + O2 + 2 H(+) = 9alpha-hydroxyandrosta-1,4-diene-3,17-dione + 2 oxidized [2Fe-2S]-[ferredoxin] + H2O. It participates in steroid metabolism; cholesterol degradation. Functionally, probably involved in the degradation of cholesterol. In vitro, catalyzes the introduction of a 9alpha-hydroxyl moiety into the ring B of 3-ketosteroid substrates such as 1,4-androstadiene-3,17-dione (ADD), 4-androstene-3,17-dione (AD), 4-androstene-17beta-ol-3-one (testosterone), 4-pregnene-3,20-dione (progesterone), 19-nor-4-androstene-3,17-dione, 1-(5alpha)-androstene-3,17-dione, 5alpha-androstane-3,17-dione, 5beta-androstane-3,17-dione, 5alpha-androstane-17beta-ol-3-one (stanolon), 11beta-hydrocortisone, 3-oxo-23,24-bisnorcholesta-4-en-22-oate (4-BNC), 23,24-bisnorcholesta-4-ene-22-oate, 3-oxo-23,24-bisnorcholesta-1,4-dien-22-oate (1,4-BNC) and 3-oxo-23,24-bisnorcholesta-1,4-dien-22-oyl-coenzyme A thioester (1,4-BNC-CoA). KshA5 has the broadest substrate range without a clear substrate preference and is active with Delta-4, Delta-1,4, 5alpha-H and 5beta-H steroids, as well as with steroids having bulky aliphatic side chains and an isopropionyl side chain at C17. This Rhodococcus rhodochrous protein is 3-ketosteroid-9-alpha-monooxygenase, oxygenase component.